The primary structure comprises 302 residues: MLRHVFLFLSQNKTLTKFAKAYGTRLGARRFVAGDTIESAVKTVKRLNRSGLCATIDYLGEYAASEKEANQVAEECKKAIQAIAEHQLDSELSLKLTSIGLDLSEELALTHLRAILSVAKQYDVAVTIDMEDYSHYEQTLSIYRQCKQEFEKLGTVIQAYLYRAAEDIKKMRDLKPNLRLVKGAYKESAAVAFPDKRGTDLHFQSLIKLQLLSGNYTAVATHDDDIIKFTKQLVAEHRIPASQFEFQMLYGIRPERQKELAKEGYRMRVYVPYGTDWFSYFMRRIAERPANAAFVLKGILKK.

Substrate is bound at residue Lys-95. Asp-129 is an active-site residue. Positions 130 and 158 each coordinate FAD. Arg-179 is an active-site residue. Residues 182-184 (KGA) and 221-222 (TH) contribute to the FAD site. A substrate-binding site is contributed by 283-284 (RR).

It belongs to the proline oxidase family. FAD serves as cofactor.

It carries out the reaction L-proline + a quinone = (S)-1-pyrroline-5-carboxylate + a quinol + H(+). It functions in the pathway amino-acid degradation; L-proline degradation into L-glutamate; L-glutamate from L-proline: step 1/2. Functionally, converts proline to delta-1-pyrroline-5-carboxylate. This chain is Proline dehydrogenase 1 (fadM), found in Bacillus subtilis subsp. natto.